The sequence spans 32 residues: Cytochrome b6-f complex subunit 6 (32 aa).

A helical transmembrane segment spans residues 6-26 (VFYIVFIALFFGIAVGIIFAI).

It belongs to the PetL family. As to quaternary structure, the 4 large subunits of the cytochrome b6-f complex are cytochrome b6, subunit IV (17 kDa polypeptide, PetD), cytochrome f and the Rieske protein, while the 4 small subunits are PetG, PetL, PetM and PetN. The complex functions as a dimer.

The protein localises to the cellular thylakoid membrane. Its function is as follows. Component of the cytochrome b6-f complex, which mediates electron transfer between photosystem II (PSII) and photosystem I (PSI), cyclic electron flow around PSI, and state transitions. PetL is important for photoautotrophic growth as well as for electron transfer efficiency and stability of the cytochrome b6-f complex. The sequence is that of Cytochrome b6-f complex subunit 6 from Mastigocladus laminosus (Fischerella sp.).